Consider the following 208-residue polypeptide: Thymidylate kinase (208 aa).

11 to 18 contacts ATP; the sequence is GGEGAGKS.

It belongs to the thymidylate kinase family.

It catalyses the reaction dTMP + ATP = dTDP + ADP. Phosphorylation of dTMP to form dTDP in both de novo and salvage pathways of dTTP synthesis. The sequence is that of Thymidylate kinase (tmk) from Caulobacter vibrioides (strain ATCC 19089 / CIP 103742 / CB 15) (Caulobacter crescentus).